A 683-amino-acid chain; its full sequence is DNA ligase 2 (683 aa).

NAD(+) contacts are provided by residues 27–31 (DGEFD), 76–77 (SL), and Glu106. The active-site N6-AMP-lysine intermediate is the Lys108. NAD(+) is bound by residues Arg129, Glu169, Lys285, and Lys309. 4 residues coordinate Zn(2+): Cys403, Cys406, Cys422, and Cys428. The BRCT domain maps to 592-681 (SIERTLEGLS…PAAVAAEEPE (90 aa)).

Belongs to the NAD-dependent DNA ligase family. LigA subfamily. It depends on Mg(2+) as a cofactor. Mn(2+) is required as a cofactor.

The enzyme catalyses NAD(+) + (deoxyribonucleotide)n-3'-hydroxyl + 5'-phospho-(deoxyribonucleotide)m = (deoxyribonucleotide)n+m + AMP + beta-nicotinamide D-nucleotide.. DNA ligase that catalyzes the formation of phosphodiester linkages between 5'-phosphoryl and 3'-hydroxyl groups in double-stranded DNA using NAD as a coenzyme and as the energy source for the reaction. It is essential for DNA replication and repair of damaged DNA. The protein is DNA ligase 2 of Nocardia farcinica (strain IFM 10152).